Consider the following 452-residue polypeptide: Bifunctional protein GlmU (452 aa).

A pyrophosphorylase region spans residues 1 to 232 (MTTNAPGAVI…EADMQGVNSR (232 aa)). Residues 11 to 14 (LAAG), Lys25, Gln78, and 83 to 84 (GT) contribute to the UDP-N-acetyl-alpha-D-glucosamine site. Residue Asp108 participates in Mg(2+) binding. Residues Gly144, Glu158, and Asn230 each coordinate UDP-N-acetyl-alpha-D-glucosamine. Asn230 is a binding site for Mg(2+). The interval 233–253 (ADLAAAEATMQQRLRMAAMAG) is linker. Positions 254–452 (GVTMLDPSSV…HKDKKKASGE (199 aa)) are N-acetyltransferase. The UDP-N-acetyl-alpha-D-glucosamine site is built by Arg319 and Lys337. The active-site Proton acceptor is the His349. 2 residues coordinate UDP-N-acetyl-alpha-D-glucosamine: Tyr352 and Asn363. Acetyl-CoA contacts are provided by residues Ala366, 372-373 (NY), Ser391, Ser409, and Arg426.

The protein in the N-terminal section; belongs to the N-acetylglucosamine-1-phosphate uridyltransferase family. In the C-terminal section; belongs to the transferase hexapeptide repeat family. In terms of assembly, homotrimer. It depends on Mg(2+) as a cofactor.

It is found in the cytoplasm. It carries out the reaction alpha-D-glucosamine 1-phosphate + acetyl-CoA = N-acetyl-alpha-D-glucosamine 1-phosphate + CoA + H(+). The enzyme catalyses N-acetyl-alpha-D-glucosamine 1-phosphate + UTP + H(+) = UDP-N-acetyl-alpha-D-glucosamine + diphosphate. The protein operates within nucleotide-sugar biosynthesis; UDP-N-acetyl-alpha-D-glucosamine biosynthesis; N-acetyl-alpha-D-glucosamine 1-phosphate from alpha-D-glucosamine 6-phosphate (route II): step 2/2. It participates in nucleotide-sugar biosynthesis; UDP-N-acetyl-alpha-D-glucosamine biosynthesis; UDP-N-acetyl-alpha-D-glucosamine from N-acetyl-alpha-D-glucosamine 1-phosphate: step 1/1. Its pathway is bacterial outer membrane biogenesis; LPS lipid A biosynthesis. Catalyzes the last two sequential reactions in the de novo biosynthetic pathway for UDP-N-acetylglucosamine (UDP-GlcNAc). The C-terminal domain catalyzes the transfer of acetyl group from acetyl coenzyme A to glucosamine-1-phosphate (GlcN-1-P) to produce N-acetylglucosamine-1-phosphate (GlcNAc-1-P), which is converted into UDP-GlcNAc by the transfer of uridine 5-monophosphate (from uridine 5-triphosphate), a reaction catalyzed by the N-terminal domain. This chain is Bifunctional protein GlmU, found in Parvibaculum lavamentivorans (strain DS-1 / DSM 13023 / NCIMB 13966).